The sequence spans 466 residues: Siroheme synthase (466 aa).

The segment at 1-203 (MNYLPIFIDI…GKIQEAKADL (203 aa)) is precorrin-2 dehydrogenase /sirohydrochlorin ferrochelatase. NAD(+) is bound by residues 22–23 (SI) and 43–44 (KS). The residue at position 128 (S128) is a Phosphoserine. A uroporphyrinogen-III C-methyltransferase region spans residues 216-466 (GAVYLVGGGP…FDAKPISSKK (251 aa)). Residue P225 participates in S-adenosyl-L-methionine binding. D248 serves as the catalytic Proton acceptor. The active-site Proton donor is the K270. S-adenosyl-L-methionine contacts are provided by residues 301 to 303 (GGD), I306, 331 to 332 (TA), M383, and G412.

The protein in the N-terminal section; belongs to the precorrin-2 dehydrogenase / sirohydrochlorin ferrochelatase family. This sequence in the C-terminal section; belongs to the precorrin methyltransferase family.

It carries out the reaction uroporphyrinogen III + 2 S-adenosyl-L-methionine = precorrin-2 + 2 S-adenosyl-L-homocysteine + H(+). The enzyme catalyses precorrin-2 + NAD(+) = sirohydrochlorin + NADH + 2 H(+). It catalyses the reaction siroheme + 2 H(+) = sirohydrochlorin + Fe(2+). The protein operates within cofactor biosynthesis; adenosylcobalamin biosynthesis; precorrin-2 from uroporphyrinogen III: step 1/1. Its pathway is cofactor biosynthesis; adenosylcobalamin biosynthesis; sirohydrochlorin from precorrin-2: step 1/1. It participates in porphyrin-containing compound metabolism; siroheme biosynthesis; precorrin-2 from uroporphyrinogen III: step 1/1. It functions in the pathway porphyrin-containing compound metabolism; siroheme biosynthesis; siroheme from sirohydrochlorin: step 1/1. The protein operates within porphyrin-containing compound metabolism; siroheme biosynthesis; sirohydrochlorin from precorrin-2: step 1/1. Its function is as follows. Multifunctional enzyme that catalyzes the SAM-dependent methylations of uroporphyrinogen III at position C-2 and C-7 to form precorrin-2 via precorrin-1. Then it catalyzes the NAD-dependent ring dehydrogenation of precorrin-2 to yield sirohydrochlorin. Finally, it catalyzes the ferrochelation of sirohydrochlorin to yield siroheme. The sequence is that of Siroheme synthase from Vesicomyosocius okutanii subsp. Calyptogena okutanii (strain HA).